We begin with the raw amino-acid sequence, 185 residues long: Isopentenyl-diphosphate Delta-isomerase (185 aa).

2 residues coordinate Mn(2+): histidine 27 and histidine 34. The Nudix hydrolase domain maps to 32 to 168 (PLHLAFSCHL…PWAFSPWLTL (137 aa)). Cysteine 69 is a catalytic residue. Cysteine 69 is a binding site for Mg(2+). Position 71 (histidine 71) interacts with Mn(2+). Glutamate 89 provides a ligand contact to Mg(2+). Mn(2+) contacts are provided by glutamate 118 and glutamate 120. The active site involves glutamate 120.

It belongs to the IPP isomerase type 1 family. It depends on Mg(2+) as a cofactor. Requires Mn(2+) as cofactor.

The protein resides in the cytoplasm. The enzyme catalyses isopentenyl diphosphate = dimethylallyl diphosphate. Its pathway is isoprenoid biosynthesis; dimethylallyl diphosphate biosynthesis; dimethylallyl diphosphate from isopentenyl diphosphate: step 1/1. In terms of biological role, catalyzes the 1,3-allylic rearrangement of the homoallylic substrate isopentenyl (IPP) to its highly electrophilic allylic isomer, dimethylallyl diphosphate (DMAPP). The protein is Isopentenyl-diphosphate Delta-isomerase of Leifsonia xyli subsp. xyli (strain CTCB07).